A 151-amino-acid chain; its full sequence is Protein INO4 (151 aa).

The bHLH domain occupies 45-97; that stretch reads QIRINHVSSEKKRRELERAIFDELVAVVPDLQPQESRSELIIYLKSLSYLSWL. Residues 112 to 137 are disordered; it reads HEAKTGSSSSSDPVQEQNGNIRDLVP. Residues 116-131 are compositionally biased toward polar residues; it reads TGSSSSSDPVQEQNGN.

As to quaternary structure, efficient DNA binding requires dimerization with another bHLH protein.

Its subcellular location is the nucleus. Functionally, transcriptional activator of phospholipid synthetic genes (such as INO1, CHO1/PSS, CHO2/PEM1, OPI3/PEM2, etc.). This chain is Protein INO4 (INO4), found in Saccharomyces cerevisiae (strain ATCC 204508 / S288c) (Baker's yeast).